The sequence spans 317 residues: Melanocyte-stimulating hormone receptor (317 aa).

Over 1–37 the chain is Extracellular; it reads MPVLGSQRRLLGSLNCTPPATLPLTLAPNRTGPQCLE. A glycan (N-linked (GlcNAc...) asparagine) is linked at asparagine 29. The chain crosses the membrane as a helical span at residues 38 to 63; the sequence is VSIPDGLFLSLGLVSLVENVLVVAAI. Residues 64–72 lie on the Cytoplasmic side of the membrane; that stretch reads AKNRNLHSP. A helical transmembrane segment spans residues 73 to 93; it reads MYYFICCLAMSDLLVSVSNVL. The Extracellular segment spans residues 94–118; the sequence is ETAVMLLLEAGVLATRAAVVQQLDN. A helical transmembrane segment spans residues 119–140; the sequence is VIDVLICSSMVSSLCFLGAIAV. The Cytoplasmic segment spans residues 141–163; sequence DRYISIFYALRYHSVVTLPRAWR. The chain crosses the membrane as a helical span at residues 164-183; the sequence is IIAAIWVASILTSVLSITYY. Residues 184-191 lie on the Extracellular side of the membrane; it reads NHTVVLLC. A helical membrane pass occupies residues 192–211; it reads LVGFFIAMLALMAVLYVHML. Over 212-240 the chain is Cytoplasmic; that stretch reads ARACQHARGIARLQKRQRPIHQGFGLKGA. Residues 241–266 traverse the membrane as a helical segment; sequence ATLTILLGVFFLCWGPFFLHLSLIVL. Residues 267 to 279 are Extracellular-facing; that stretch reads CPQHPTCGCIFKN. The chain crosses the membrane as a helical span at residues 280-300; that stretch reads FNLFLALIICNAIVDPLIYAF. Residues 301–317 lie on the Cytoplasmic side of the membrane; the sequence is RSQELRKTLQEVLQCSW. Cysteine 315 carries S-palmitoyl cysteine lipidation.

It belongs to the G-protein coupled receptor 1 family. As to quaternary structure, interacts with MGRN1, but does not undergo MGRN1-mediated ubiquitination; this interaction competes with GNAS-binding and thus inhibits agonist-induced cAMP production. Interacts with OPN3; the interaction results in a decrease in MC1R-mediated cAMP signaling and ultimately a decrease in melanin production in melanocytes.

The protein localises to the cell membrane. Functionally, receptor for MSH (alpha, beta and gamma) and ACTH. The activity of this receptor is mediated by G proteins which activate adenylate cyclase. Mediates melanogenesis, the production of eumelanin (black/brown) and phaeomelanin (red/yellow), via regulation of cAMP signaling in melanocytes. The protein is Melanocyte-stimulating hormone receptor (MC1R) of Ovis aries (Sheep).